Here is a 556-residue protein sequence, read N- to C-terminus: Glutamine--tRNA ligase (556 aa).

The 'HIGH' region motif lies at P33–H43. ATP-binding positions include E34–N36 and H40–S46. L-glutamine-binding residues include D66 and Y210. ATP is bound by residues T229, R259–L260, and M267–K269. Residues V266–R270 carry the 'KMSKS' region motif.

The protein belongs to the class-I aminoacyl-tRNA synthetase family. As to quaternary structure, monomer.

The protein resides in the cytoplasm. It carries out the reaction tRNA(Gln) + L-glutamine + ATP = L-glutaminyl-tRNA(Gln) + AMP + diphosphate. This Clostridium kluyveri (strain ATCC 8527 / DSM 555 / NBRC 12016 / NCIMB 10680 / K1) protein is Glutamine--tRNA ligase.